Here is a 229-residue protein sequence, read N- to C-terminus: Uracil-DNA glycosylase (229 aa).

Asp-64 serves as the catalytic Proton acceptor.

This sequence belongs to the uracil-DNA glycosylase (UDG) superfamily. UNG family.

It is found in the cytoplasm. It carries out the reaction Hydrolyzes single-stranded DNA or mismatched double-stranded DNA and polynucleotides, releasing free uracil.. Its function is as follows. Excises uracil residues from the DNA which can arise as a result of misincorporation of dUMP residues by DNA polymerase or due to deamination of cytosine. The polypeptide is Uracil-DNA glycosylase (Klebsiella pneumoniae subsp. pneumoniae (strain ATCC 700721 / MGH 78578)).